The sequence spans 421 residues: Cyclin-A1 (421 aa).

Residues 1–20 form a disordered region; that stretch reads MRRHSSKSGVALPPVGQGPD.

This sequence belongs to the cyclin family. Cyclin AB subfamily. As to quaternary structure, interacts with the CDK2 and the CDC2 protein kinases to form a serine/threonine kinase holoenzyme complex. The cyclin subunit imparts substrate specificity to the complex. Does not bind CDK4 and CDK5 (in vitro). The cyclin A1-CDK2 complex interacts with transcription factor E2F-1 and RB proteins. Found in a complex with CDK2, CABLES1 and CCNE1. Interacts with INCA1 and KLHDC9. Post-translationally, polyubiquitinated via 'Lys-11'-linked ubiquitin by the anaphase-promoting complex (APC/C), leading to its degradation by the proteasome. Deubiquitinated and stabilized by USP37 enables entry into S phase. Ubiquitinated during the G1 phase by the SCF(FBXO31) complex, leading to its proteasomal degradation.

The protein resides in the nucleus. Functionally, may be involved in the control of the cell cycle at the G1/S (start) and G2/M (mitosis) transitions. May primarily function in the control of the germline meiotic cell cycle and additionally in the control of mitotic cell cycle in some somatic cells. The chain is Cyclin-A1 (Ccna1) from Rattus norvegicus (Rat).